Here is a 1943-residue protein sequence, read N- to C-terminus: Protocadherin-15 (1943 aa).

The signal sequence occupies residues 1–26 (MFLQFAVWKCLPHGILIASLLVVSWG). Topologically, residues 27–1381 (QYDDDWQYED…GESLGYTEGA (1355 aa)) are extracellular. Cysteines 37 and 125 form a disulfide. 11 Cadherin domains span residues 45–152 (PATI…SPTF), 153–270 (KHES…GPMF), 283–400 (RPLT…SPYF), 401–514 (TMPS…TPTF), 515–621 (PEIS…PPRF), 622–722 (PQLM…APVF), 724–824 (PYLP…SPVF), 825–931 (TNST…PPVF), 932–1040 (SKRI…IPRF), 1042–1149 (QEEY…PPVF), and 1150–1264 (QKKF…PPTL). N-linked (GlcNAc...) asparagine glycans are attached at residues asparagine 57, asparagine 102, and asparagine 206. N-linked (GlcNAc...) asparagine glycosylation is found at asparagine 424, asparagine 564, asparagine 667, asparagine 729, asparagine 773, asparagine 826, and asparagine 856. Asparagine 1069, asparagine 1089, and asparagine 1180 each carry an N-linked (GlcNAc...) asparagine glycan. Residues 1382 to 1402 (LLALAFIIILCCIPAILVVLV) form a helical membrane-spanning segment. Residues 1403 to 1943 (SYRQFKVRQA…VQPHSQSTSL (541 aa)) are Cytoplasmic-facing. Disordered regions lie at residues 1425–1453 (PAAKPAAPVPAAPAPPPPPPPPPPGAHLY), 1475–1533 (GNNS…STHN), and 1714–1865 (ILNS…EPHR). The segment covering 1431-1449 (APVPAAPAPPPPPPPPPPG) has biased composition (pro residues). Basic and acidic residues-rich tracts occupy residues 1480 to 1489 (PEDRSSHRDG) and 1498 to 1509 (ESHEPAHVEGPL). Composition is skewed to pro residues over residues 1742–1760 (PHPPSISAPLPHPPLPRPP) and 1769–1779 (PLSPPNPPPPQ). The span at 1784–1795 (SLPISTPPTSSL) shows a compositional bias: low complexity. Positions 1796–1821 (PLPPPLSLPPPPRPPAPRLFPQPPST) are enriched in pro residues. Residues 1822–1834 (SIPSTDSISAPAA) show a composition bias toward low complexity. Polar residues predominate over residues 1846 to 1858 (TTSTTQPPASNPQ).

In terms of assembly, antiparallel heterodimer with CDH23. Found in a complex with TMIE and LHFPL5. Interacts with LHFPL5/TMHS; this interaction is required for efficient localization to hair bundles. Interacts with MYO7A. Interacts with USH1G; this interaction may recruit USH1G to the plasma membrane. Interacts with TOMT. Isoforms CD1 and CD3 interact with TMC1 (via N-terminus) and TMC2 (via N-terminus). Interacts with PIEZO1. As to expression, expressed in brain and sensory epithelium of the developing inner ear. Expressed in the retina, in the photoreceptor inner segments, the outer plexiform layer, the inner nuclei layer and the ganglion cell layer and, more diffusely in the inner plexiform layer (at protein level). Not detected in the retinal pigment epithelium (at protein level). Expressed in the spleen, dorsal root ganglion, dorsal aspect of neural tube, floor plate and ependymal cells adjacent to the neural canal.

The protein resides in the cell membrane. It localises to the secreted. In terms of biological role, calcium-dependent cell-adhesion protein. Required for inner ear neuroepithelial cell elaboration and cochlear function. Probably involved in the maintenance of normal retinal function. The protein is Protocadherin-15 (Pcdh15) of Mus musculus (Mouse).